A 461-amino-acid chain; its full sequence is Chromosomal replication initiator protein DnaA (461 aa).

The tract at residues 1–68 (MINAWAQIEH…EKAAASVLGS (68 aa)) is domain I, interacts with DnaA modulators. A domain II region spans residues 68–118 (SVPTITVVSGEEPAAAPRPVQVPAQKRPAAARTSGAEQMGLPLHYASRSAD). Residues 119-336 (SIKWMHSFDE…SCLRNLLLKA (218 aa)) are domain III, AAA+ region. Residues Gly-162, Gly-164, Lys-165, and Thr-166 each contribute to the ATP site. The domain IV, binds dsDNA stretch occupies residues 337-461 (RLLNQQITMD…VERNGRIIHP (125 aa)).

It belongs to the DnaA family. In terms of assembly, oligomerizes as a right-handed, spiral filament on DNA at oriC.

Its subcellular location is the cytoplasm. Functionally, plays an essential role in the initiation and regulation of chromosomal replication. ATP-DnaA binds to the origin of replication (oriC) to initiate formation of the DNA replication initiation complex once per cell cycle. Binds the DnaA box (a 9 base pair repeat at the origin) and separates the double-stranded (ds)DNA. Forms a right-handed helical filament on oriC DNA; dsDNA binds to the exterior of the filament while single-stranded (ss)DNA is stabiized in the filament's interior. The ATP-DnaA-oriC complex binds and stabilizes one strand of the AT-rich DNA unwinding element (DUE), permitting loading of DNA polymerase. After initiation quickly degrades to an ADP-DnaA complex that is not apt for DNA replication. Binds acidic phospholipids. The protein is Chromosomal replication initiator protein DnaA of Oleidesulfovibrio alaskensis (strain ATCC BAA-1058 / DSM 17464 / G20) (Desulfovibrio alaskensis).